The chain runs to 213 residues: Imidazole glycerol phosphate synthase subunit HisH 1 (213 aa).

Residues 4-213 enclose the Glutamine amidotransferase type-1 domain; sequence TVAVIDYGMG…QNFVAWDGRW (210 aa). The active-site Nucleophile is Cys82. Residues His191 and Glu193 contribute to the active site.

In terms of assembly, heterodimer of HisH and HisF.

It is found in the cytoplasm. The catalysed reaction is 5-[(5-phospho-1-deoxy-D-ribulos-1-ylimino)methylamino]-1-(5-phospho-beta-D-ribosyl)imidazole-4-carboxamide + L-glutamine = D-erythro-1-(imidazol-4-yl)glycerol 3-phosphate + 5-amino-1-(5-phospho-beta-D-ribosyl)imidazole-4-carboxamide + L-glutamate + H(+). It catalyses the reaction L-glutamine + H2O = L-glutamate + NH4(+). It functions in the pathway amino-acid biosynthesis; L-histidine biosynthesis; L-histidine from 5-phospho-alpha-D-ribose 1-diphosphate: step 5/9. Its function is as follows. IGPS catalyzes the conversion of PRFAR and glutamine to IGP, AICAR and glutamate. The HisH subunit provides the glutamine amidotransferase activity that produces the ammonia necessary to HisF for the synthesis of IGP and AICAR. In Pseudomonas aeruginosa (strain ATCC 15692 / DSM 22644 / CIP 104116 / JCM 14847 / LMG 12228 / 1C / PRS 101 / PAO1), this protein is Imidazole glycerol phosphate synthase subunit HisH 1 (hisH1).